The following is a 539-amino-acid chain: GMP synthase [glutamine-hydrolyzing] (539 aa).

The 199-residue stretch at 4 to 202 folds into the Glutamine amidotransferase type-1 domain; sequence KILILDFGSQ…VLGIAGCKPD (199 aa). Cys81 serves as the catalytic Nucleophile. Residues His176 and Glu178 contribute to the active site. A GMPS ATP-PPase domain is found at 203–395; it reads WVMRDHIEEA…LGLPPEMVYR (193 aa). 230–236 contributes to the ATP binding site; the sequence is SGGVDSS.

In terms of assembly, homodimer.

The catalysed reaction is XMP + L-glutamine + ATP + H2O = GMP + L-glutamate + AMP + diphosphate + 2 H(+). It participates in purine metabolism; GMP biosynthesis; GMP from XMP (L-Gln route): step 1/1. Functionally, catalyzes the synthesis of GMP from XMP. The chain is GMP synthase [glutamine-hydrolyzing] from Cupriavidus necator (strain ATCC 17699 / DSM 428 / KCTC 22496 / NCIMB 10442 / H16 / Stanier 337) (Ralstonia eutropha).